The following is a 119-amino-acid chain: Large ribosomal subunit protein uL18 (119 aa).

It belongs to the universal ribosomal protein uL18 family. Part of the 50S ribosomal subunit; part of the 5S rRNA/L5/L18/L25 subcomplex. Contacts the 5S and 23S rRNAs.

This is one of the proteins that bind and probably mediate the attachment of the 5S RNA into the large ribosomal subunit, where it forms part of the central protuberance. In Endomicrobium trichonymphae, this protein is Large ribosomal subunit protein uL18.